Here is a 206-residue protein sequence, read N- to C-terminus: Glycerol-3-phosphate acyltransferase 1 (206 aa).

The next 5 membrane-spanning stretches (helical) occupy residues 14–34 (IALAAAIIGYLFGSIPFGLIL), 67–87 (ATLLLDALKASAAAWVVSYFL), 91–111 (AAIIAGFFAFIGHLFPVWIGF), 124–144 (LLGVAPIMVVLFAAVWLAVAF), and 148–168 (YSSLSALVAMLVIPVALWILG).

It belongs to the PlsY family. In terms of assembly, probably interacts with PlsX.

The protein resides in the cell inner membrane. The catalysed reaction is an acyl phosphate + sn-glycerol 3-phosphate = a 1-acyl-sn-glycero-3-phosphate + phosphate. It participates in lipid metabolism; phospholipid metabolism. In terms of biological role, catalyzes the transfer of an acyl group from acyl-phosphate (acyl-PO(4)) to glycerol-3-phosphate (G3P) to form lysophosphatidic acid (LPA). This enzyme utilizes acyl-phosphate as fatty acyl donor, but not acyl-CoA or acyl-ACP. The protein is Glycerol-3-phosphate acyltransferase 1 of Rhizobium johnstonii (strain DSM 114642 / LMG 32736 / 3841) (Rhizobium leguminosarum bv. viciae).